Here is a 62-residue protein sequence, read N- to C-terminus: Temporin-CDYb (62 aa).

Residues 1-22 (MFTLKKSLLLLFFLGTINLSLC) form the signal peptide. The propeptide occupies 23 to 45 (EEERDADEEERRDDPEERAVQVE). Position 60 is a leucine amide (leucine 60).

This sequence belongs to the frog skin active peptide (FSAP) family. Temporin subfamily. Expressed by the skin glands.

The protein resides in the secreted. Antimicrobial peptide. Has low activity against the Gram-positive bacterium S.aureus (MIC&gt;100 uM) and the Gram-negative bacterium E.coli (MIC&gt;100 uM). Has weak hemolytic activity against human erythrocytes. This is Temporin-CDYb from Rana dybowskii (Dybovsky's frog).